Reading from the N-terminus, the 1157-residue chain is Cell division cycle and apoptosis regulator protein 1 (1157 aa).

Disordered stretches follow at residues 289 to 365 (PVRI…PRRV) and 608 to 641 (LQGDRKEADGEQEEEDKEDGDAKEISTPTHWSKL). Basic and acidic residues-rich tracts occupy residues 300 to 341 (RRIE…DRSP) and 348 to 359 (ERSPRRERERSP). A coiled-coil region spans residues 601–625 (KQQLVDKLQGDRKEADGEQEEEDKE). Positions 617–628 (GEQEEEDKEDGD) are enriched in acidic residues. In terms of domain architecture, SAP spans 643 to 677 (PKIMKVNDLRKELESRTLSSKGLKSQLIARLTKQL). Composition is skewed to basic and acidic residues over residues 685–694 (EQKELEKCEK), 701–721 (ERKSEDDKEEEERKRQEELER), 804–824 (EEKKDKEKKCKKEDKRERKED), and 838–861 (SSDDKIKLEEKEERKRDDRRKEDY). Disordered regions lie at residues 685–721 (EQKELEKCEKEEEEEEERKSEDDKEEEERKRQEELER) and 804–926 (EEKK…KDKK). Residues 862 to 896 (REEDDPDYENQDDYEPIAAEEDDGDYDDREDDDDD) are compositionally biased toward acidic residues. The segment covering 897–926 (SSSKDKREDKRDGNRYSKERQSKDKEKDKK) has biased composition (basic and acidic residues). Residues 1043-1128 (DVGSLLQKLE…DQLTNTIKNL (86 aa)) adopt a coiled-coil conformation. A Phosphoserine modification is found at Ser-1157.

The protein localises to the cytoplasm. It localises to the perinuclear region. Functionally, transcriptional coactivator for nuclear receptors which may play an important role in regulating cell growth and apoptosis. The sequence is that of Cell division cycle and apoptosis regulator protein 1 (ccar1) from Xenopus laevis (African clawed frog).